We begin with the raw amino-acid sequence, 85 residues long: U4-theraphotoxin-Hhn1a (85 aa).

The first 22 residues, M1 to A22, serve as a signal peptide directing secretion. Residues E23–R48 constitute a propeptide that is removed on maturation. 3 cysteine pairs are disulfide-bonded: C52–C66, C56–C77, and C71–C82.

Belongs to the neurotoxin 12 (Hwtx-2) family. 02 (Hwtx-2) subfamily. In terms of assembly, monomer. In terms of tissue distribution, expressed by the venom gland.

It localises to the secreted. Neurotoxin active on both insects and mammals. This Cyriopagopus hainanus (Chinese bird spider) protein is U4-theraphotoxin-Hhn1a.